The chain runs to 232 residues: Orotidine 5'-phosphate decarboxylase (232 aa).

Residues D13, K35, 62 to 71 (DLKFHDIPNT), T122, R182, Q191, G211, and R212 contribute to the substrate site. K64 acts as the Proton donor in catalysis.

This sequence belongs to the OMP decarboxylase family. Type 1 subfamily. In terms of assembly, homodimer.

It catalyses the reaction orotidine 5'-phosphate + H(+) = UMP + CO2. It functions in the pathway pyrimidine metabolism; UMP biosynthesis via de novo pathway; UMP from orotate: step 2/2. In terms of biological role, catalyzes the decarboxylation of orotidine 5'-monophosphate (OMP) to uridine 5'-monophosphate (UMP). The polypeptide is Orotidine 5'-phosphate decarboxylase (Pseudomonas aeruginosa (strain LESB58)).